The chain runs to 376 residues: MAKRDYYEVLGVAKNASDDEIKKAYRKLAMKYHPDRNPDSKDAEEHFKEAKEAYEMLSDGQKRAAYDQYGHAGVDPNVGAAGAQGFGGFADAFGDIFGDIFGQAAGGGRARGGPQVYRGADLRYSMEITLEQAAHGYDTQIRVPSWAACGVCHGSGAKPGTKPETCPTCHGQGTVRMSQGFFSIQQTCPKCHGTGTYIPEPCAHCHGSGKVKETKTLEVKIPAGIDDGMRIRSAGNGEPGINGGPSGDLYVEIHIKPHAVFERDGDDLHCQMPIPFTTAALGGEIEVPTLAGRASFTVPEGTQSGKTFRLRGKGIKGLHSSIAGDLYVHVQVETPVKLTDQQRDLLKQFEKSLAEGGPRHSPQSKSWFDRVKSFFE.

The J domain maps to Asp5–Gly70. The CR-type zinc-finger motif lies at Gly136–Thr214. Zn(2+) is bound by residues Cys149, Cys152, Cys166, Cys169, Cys188, Cys191, Cys202, and Cys205. CXXCXGXG motif repeat units follow at residues Cys149–Gly156, Cys166–Gly173, Cys188–Gly195, and Cys202–Gly209.

This sequence belongs to the DnaJ family. In terms of assembly, homodimer. It depends on Zn(2+) as a cofactor.

The protein localises to the cytoplasm. Participates actively in the response to hyperosmotic and heat shock by preventing the aggregation of stress-denatured proteins and by disaggregating proteins, also in an autonomous, DnaK-independent fashion. Unfolded proteins bind initially to DnaJ; upon interaction with the DnaJ-bound protein, DnaK hydrolyzes its bound ATP, resulting in the formation of a stable complex. GrpE releases ADP from DnaK; ATP binding to DnaK triggers the release of the substrate protein, thus completing the reaction cycle. Several rounds of ATP-dependent interactions between DnaJ, DnaK and GrpE are required for fully efficient folding. Also involved, together with DnaK and GrpE, in the DNA replication of plasmids through activation of initiation proteins. This chain is Chaperone protein DnaJ, found in Burkholderia mallei (strain NCTC 10229).